Reading from the N-terminus, the 732-residue chain is Zinc/cadmium/lead-transporting P-type ATPase (732 aa).

Topologically, residues 1–124 are cytoplasmic; that stretch reads MSTPDNHGKK…QAAEEPQASR (124 aa). An HMA domain is found at 48–112; the sequence is TRYSWKVSGM…ALQKAGYSLR (65 aa). Aspartate 58, cysteine 59, and cysteine 62 together coordinate Zn(2+). A helical transmembrane segment spans residues 125-145; it reads LKENLPLITLIVMMAISWGLE. Position 146 (glutamine 146) is a topological domain, periplasmic. Residues 147–167 form a helical membrane-spanning segment; the sequence is FNHPFGQLAFIATTLVGLYPI. Residues 168–179 lie on the Cytoplasmic side of the membrane; that stretch reads ARQALRLIKSGS. Residues 180 to 197 form a helical membrane-spanning segment; it reads YFAIETLMSVAAIGALFI. Residues 198 to 202 are Periplasmic-facing; it reads GATAE. The chain crosses the membrane as a helical span at residues 203–222; that stretch reads AAMVLLLFLIGERLEGWAAS. Over 223–356 the chain is Cytoplasmic; sequence RARQGVSALM…IDRFSRIYTP (134 aa). A helical membrane pass occupies residues 357-377; the sequence is AIMAVALLVTLVPPLLFAASW. Residues 378–383 lie on the Periplasmic side of the membrane; the sequence is QEWIYK. A helical membrane pass occupies residues 384–404; that stretch reads GLTLLLIGCPCALVISTPAAI. Zn(2+) is bound by residues cysteine 392 and cysteine 394. Residues 405–685 lie on the Cytoplasmic side of the membrane; that stretch reads TSGLAAAARR…RATHANIRQN (281 aa). Aspartate 436 acts as the 4-aspartylphosphate intermediate in catalysis. Mg(2+) is bound by residues aspartate 436, threonine 438, and aspartate 628. The chain crosses the membrane as a helical span at residues 686–702; the sequence is ITIALGLKGIFLVTTLL. Topologically, residues 703 to 707 are periplasmic; that stretch reads GMTGL. A helical transmembrane segment spans residues 708–729; sequence WLAVLADTGATVLVTANALRLL. Aspartate 714 provides a ligand contact to Zn(2+). Residues 730-732 lie on the Cytoplasmic side of the membrane; sequence RRR.

The protein belongs to the cation transport ATPase (P-type) (TC 3.A.3) family. Type IB subfamily.

Its subcellular location is the cell inner membrane. The enzyme catalyses Pb(2+)(in) + ATP + H2O = Pb(2+)(out) + ADP + phosphate + H(+). The catalysed reaction is Zn(2+)(in) + ATP + H2O = Zn(2+)(out) + ADP + phosphate + H(+). It catalyses the reaction Cd(2+)(in) + ATP + H2O = Cd(2+)(out) + ADP + phosphate + H(+). Inhibited by orthovanadate. Confers resistance to zinc, cadmium and lead. Couples the hydrolysis of ATP with the export of zinc, cadmium or lead, with highest activity when the metals are present as metal-thiolate complexes. Can also bind nickel, copper, cobalt and mercury. This is Zinc/cadmium/lead-transporting P-type ATPase from Escherichia coli (strain K12).